The following is a 358-amino-acid chain: S-adenosylmethionine:tRNA ribosyltransferase-isomerase (358 aa).

Belongs to the QueA family. As to quaternary structure, monomer.

It localises to the cytoplasm. The enzyme catalyses 7-aminomethyl-7-carbaguanosine(34) in tRNA + S-adenosyl-L-methionine = epoxyqueuosine(34) in tRNA + adenine + L-methionine + 2 H(+). It participates in tRNA modification; tRNA-queuosine biosynthesis. In terms of biological role, transfers and isomerizes the ribose moiety from AdoMet to the 7-aminomethyl group of 7-deazaguanine (preQ1-tRNA) to give epoxyqueuosine (oQ-tRNA). The polypeptide is S-adenosylmethionine:tRNA ribosyltransferase-isomerase (Desulfotalea psychrophila (strain LSv54 / DSM 12343)).